The sequence spans 775 residues: DNA polymerase (775 aa).

It belongs to the DNA polymerase type-B family.

It catalyses the reaction DNA(n) + a 2'-deoxyribonucleoside 5'-triphosphate = DNA(n+1) + diphosphate. The polypeptide is DNA polymerase (pol) (Thermococcus sp. (strain 9oN-7)).